Here is a 1132-residue protein sequence, read N- to C-terminus: Rho GTPase-activating protein gacE (1132 aa).

The Rho-GAP domain maps to 76–262 (LEMNKILKSE…FLISNYLNVF (187 aa)). 2 disordered regions span residues 279–354 (NELL…SSPI) and 472–517 (NSTT…SLIN). Residues 281 to 301 (LLNNNNNNNNVIMPTTTTTTT) show a composition bias toward low complexity. Residues 302 to 311 (SASSSILPTD) are compositionally biased toward polar residues. Low complexity-rich tracts occupy residues 328–354 (SIPL…SSPI), 473–498 (STTT…STTT), and 507–517 (SNSASNNSLIN).

The protein localises to the cytoplasm. Its function is as follows. Rho GTPase-activating protein involved in the signal transduction pathway. The protein is Rho GTPase-activating protein gacE (gacE) of Dictyostelium discoideum (Social amoeba).